The chain runs to 561 residues: DNA ligase B (561 aa).

Residue Lys-125 is the N6-AMP-lysine intermediate of the active site.

Belongs to the NAD-dependent DNA ligase family. LigB subfamily.

It catalyses the reaction NAD(+) + (deoxyribonucleotide)n-3'-hydroxyl + 5'-phospho-(deoxyribonucleotide)m = (deoxyribonucleotide)n+m + AMP + beta-nicotinamide D-nucleotide.. Its function is as follows. Catalyzes the formation of phosphodiester linkages between 5'-phosphoryl and 3'-hydroxyl groups in double-stranded DNA using NAD as a coenzyme and as the energy source for the reaction. The protein is DNA ligase B of Salmonella agona (strain SL483).